The following is a 462-amino-acid chain: Nucleolar protein 12 (462 aa).

Disordered regions lie at residues Leu-24–Ser-148 and Lys-191–Lys-215. Residues Pro-47–Val-59 are compositionally biased toward acidic residues. Positions Gly-108 to Ser-124 are enriched in basic and acidic residues. The span at Ser-125–Thr-134 shows a compositional bias: acidic residues. The segment covering Asp-137–Ser-146 has biased composition (polar residues). A compositionally biased stretch (acidic residues) spans Asp-198–Glu-211. The region spanning Arg-297–Asn-378 is the RRM domain. 2 disordered regions span residues Lys-381–Thr-400 and Glu-432–Gln-462. Polar residues predominate over residues Gln-383 to Gln-397. The span at Lys-438–Ala-455 shows a compositional bias: basic residues.

This sequence belongs to the RRM RBM34 family.

It localises to the nucleus. The protein resides in the nucleolus. In terms of biological role, involved in pre-25S rRNA processing. The sequence is that of Nucleolar protein 12 (NOP12) from Kluyveromyces lactis (strain ATCC 8585 / CBS 2359 / DSM 70799 / NBRC 1267 / NRRL Y-1140 / WM37) (Yeast).